Here is a 228-residue protein sequence, read N- to C-terminus: Mediator of RNA polymerase II transcription subunit 7-B (228 aa).

Belongs to the Mediator complex subunit 7 family. In terms of assembly, component of the Mediator complex.

Its subcellular location is the nucleus. Functionally, component of the Mediator complex, a coactivator involved in the regulated transcription of nearly all RNA polymerase II-dependent genes. Mediator functions as a bridge to convey information from gene-specific regulatory proteins to the basal RNA polymerase II transcription machinery. Mediator is recruited to promoters by direct interactions with regulatory proteins and serves as a scaffold for the assembly of a functional preinitiation complex with RNA polymerase II and the general transcription factors. This is Mediator of RNA polymerase II transcription subunit 7-B (med7-b) from Xenopus laevis (African clawed frog).